The following is a 538-amino-acid chain: Inositol-3-phosphate synthase (538 aa).

NAD(+) contacts are provided by Gly-74, Gly-75, Asn-76, Asn-77, Asp-150, Ser-186, Val-187, Gln-197, Asp-198, Arg-200, Thr-247, Ala-248, Asn-249, Thr-250, Gly-298, Ser-299, Asp-323, Ser-326, Asn-357, Asn-358, Asp-359, Lys-372, Gly-412, Asp-413, Asp-441, and Ser-442.

It belongs to the myo-inositol 1-phosphate synthase family. Homotetramer. Requires NAD(+) as cofactor.

The protein localises to the cytoplasm. The catalysed reaction is D-glucose 6-phosphate = 1D-myo-inositol 3-phosphate. It functions in the pathway polyol metabolism; myo-inositol biosynthesis; myo-inositol from D-glucose 6-phosphate: step 1/2. Its function is as follows. Key enzyme in myo-inositol biosynthesis pathway that catalyzes the conversion of glucose 6-phosphate to 1-myo-inositol 1-phosphate in a NAD-dependent manner. Rate-limiting enzyme in the synthesis of all inositol-containing compounds. This is Inositol-3-phosphate synthase (INO1) from Candida glabrata (strain ATCC 2001 / BCRC 20586 / JCM 3761 / NBRC 0622 / NRRL Y-65 / CBS 138) (Yeast).